Here is a 218-residue protein sequence, read N- to C-terminus: MRDPEFWHNKWAANQIGFHLEDVNPLLIRFWSDLAPKRSEKVLVPLCGKSEDLIWLANQHDSVQGVELSQIAVRSFFAEHFYTPTVTRLNAQHELYQFDELTLFTGDFFTAPVESVDLVYDRAALVALPEEMRAEYAQRVLQLLKPGGRILLVSMDYVQTELSGPPFSVPEAEIRTLFMGCEVRRVYQDTSIDPHLNKRTQAGLSRFAEEVWVIEKSE.

S-adenosyl-L-methionine is bound by residues W11, L46, E67, and R122.

Belongs to the class I-like SAM-binding methyltransferase superfamily. TPMT family.

It localises to the cytoplasm. The enzyme catalyses S-adenosyl-L-methionine + a thiopurine = S-adenosyl-L-homocysteine + a thiopurine S-methylether.. The chain is Thiopurine S-methyltransferase from Vibrio cholerae serotype O1 (strain ATCC 39315 / El Tor Inaba N16961).